We begin with the raw amino-acid sequence, 1030 residues long: F-box/WD repeat-containing protein 10 (1030 aa).

The region spanning 280-329 is the F-box domain; the sequence is RDFIRDLPLHLSKYILRMLDKHSLNRCIFVSQHWATLAQQVKVDQSMHSF. 5 WD repeats span residues 466-505, 508-547, 549-584, 587-624, and 626-667; these read GHAG…CVRI, GHQG…KTFK, KDPI…LQKT, GHEG…ERCL, and AFKH…KVIK. A disordered region spans residues 709–773; the sequence is KNKVKKSKDK…LSSDDMETPV (65 aa). The segment covering 716–733 has biased composition (basic and acidic residues); sequence KDKEEEREETSLGDEHSR. A compositionally biased stretch (polar residues) spans 734 to 749; that stretch reads STIQGHSLKDSVSSKQ. The stretch at 963–992 forms a coiled coil; that stretch reads FMLMTVKEEKEFAEAKMKEYEASVSTKEVD.

Its function is as follows. Probable substrate-recognition component of a SCF (SKP1-CUL1-F-box protein)-type E3 ubiquitin ligase complex which mediates the ubiquitination and subsequent proteasomal degradation of target proteins. Overexpression is leading to degradation of CBX5 and CBX1. This chain is F-box/WD repeat-containing protein 10 (Fbxw10), found in Mus musculus (Mouse).